The primary structure comprises 140 residues: MNRLLQQSVSRGPLAVRASSTITTKPPTPNQITKNNAQFDKVTHTGQAWDQSDYRLQRFDISKKSVNPNVAMHLIDQRPPEDCGDKRVVFCDGGHPALGHPKVYINLDKPGVHACGYCGNRFYNSHATKAEDMKIQHLNC.

It belongs to the complex I NDUFS6 subunit family. As to quaternary structure, complex I is composed of 45 different subunits. This is a component of the iron-sulfur (IP) fragment of the enzyme.

The protein resides in the mitochondrion inner membrane. Accessory subunit of the mitochondrial membrane respiratory chain NADH dehydrogenase (Complex I), that is believed not to be involved in catalysis. Complex I functions in the transfer of electrons from NADH to the respiratory chain. The immediate electron acceptor for the enzyme is believed to be ubiquinone. The polypeptide is Probable NADH dehydrogenase [ubiquinone] iron-sulfur protein 6, mitochondrial (nduf-6) (Caenorhabditis elegans).